We begin with the raw amino-acid sequence, 279 residues long: MSRERPPGTDIPRNLSFIAALTERAYYRSQRPSLEEEPEEEPGEGGTRFGARSRAHAPSRGRRARSAPAGGGGARAPRSRSPDTRKRVRFADALGLELAVVRRFRPGELPRVPRHVQIQLQRDALRHFAPCQPRARGLQEARAALEPASEPGFAARLLTQRICLERAEAGPLGVAGSARVVDLAYEKRVSVRWSADGWRSQREAPAAYAGPAPPPPRADRFAFRLPAPPIGGALLFALRYRVTGHEFWDNNGGRDYALRGPEHPGSGGAPEPQGWIHFI.

A phosphoserine mark is found at S16 and S33. Residues 28 to 86 (RSQRPSLEEEPEEEPGEGGTRFGARSRAHAPSRGRRARSAPAGGGGARAPRSRSPDTRK) are disordered. Residues 51 to 65 (ARSRAHAPSRGRRAR) show a composition bias toward basic residues. The residue at position 66 (S66) is a Phosphoserine. The short motif at 87–90 (RVRF) is the PP1-binding motif element. The region spanning 154 to 259 (AARLLTQRIC…NNGGRDYALR (106 aa)) is the CBM21 domain. The glycogen-binding motif stretch occupies residues 176–198 (GSARVVDLAYEKRVSVRWSADGW). The segment at 248-256 (WDNNGGRDY) is substrate-binding motif.

In terms of tissue distribution, expressed in skeletal muscle and heart with barely detectable levels in liver.

Acts as a glycogen-targeting subunit for PP1. PP1 is involved in glycogen metabolism and contributes to the activation of glycogen synthase leading to an increase in glycogen synthesis. The protein is Protein phosphatase 1 regulatory subunit 3E (PPP1R3E) of Homo sapiens (Human).